The primary structure comprises 210 residues: Redox-sensing transcriptional repressor Rex (210 aa).

Residues 17-56 constitute a DNA-binding region (H-T-H motif); it reads KYHRYLYELLKNDVDRISSKELSEKIGFTASQIRQDLNCF. An NAD(+)-binding site is contributed by 91-96; sequence GAGNIG.

Belongs to the transcriptional regulatory Rex family. In terms of assembly, homodimer.

It localises to the cytoplasm. Its function is as follows. Modulates transcription in response to changes in cellular NADH/NAD(+) redox state. The chain is Redox-sensing transcriptional repressor Rex from Clostridium botulinum (strain Loch Maree / Type A3).